A 162-amino-acid chain; its full sequence is Cyclic pyranopterin monophosphate synthase (162 aa).

Residues 75–77 and 113–114 contribute to the substrate site; these read LCH and ME. The active site involves Asp128.

The protein belongs to the MoaC family. In terms of assembly, homohexamer; trimer of dimers.

The enzyme catalyses (8S)-3',8-cyclo-7,8-dihydroguanosine 5'-triphosphate = cyclic pyranopterin phosphate + diphosphate. It participates in cofactor biosynthesis; molybdopterin biosynthesis. Catalyzes the conversion of (8S)-3',8-cyclo-7,8-dihydroguanosine 5'-triphosphate to cyclic pyranopterin monophosphate (cPMP). This is Cyclic pyranopterin monophosphate synthase from Xanthobacter autotrophicus (strain ATCC BAA-1158 / Py2).